Reading from the N-terminus, the 227-residue chain is UPF0758 protein Pcar_0065 (227 aa).

The MPN domain maps to R105–L227. H176, H178, and D189 together coordinate Zn(2+). A JAMM motif motif is present at residues H176–D189.

It belongs to the UPF0758 family.

The polypeptide is UPF0758 protein Pcar_0065 (Syntrophotalea carbinolica (strain DSM 2380 / NBRC 103641 / GraBd1) (Pelobacter carbinolicus)).